Consider the following 87-residue polypeptide: Tektin-2 (87 aa).

Residues 26–55 (VEEELLKEVEVIEATKKALQQRVSQAFQQL) adopt a coiled-coil conformation.

This sequence belongs to the tektin family. Microtubule inner protein component of sperm flagellar doublet microtubules. May interact with CCDC172. Post-translationally, tyrosine phosphorylated. In terms of processing, ubiquitinated, leading to its degradation. Deubiquitinated by USP16, promoting its stability. In terms of tissue distribution, detected in sperm flagella (at protein level).

The protein resides in the cytoplasm. It localises to the cytoskeleton. It is found in the cilium axoneme. Its subcellular location is the flagellum axoneme. The protein localises to the microtubule organizing center. In terms of biological role, microtubule inner protein (MIP) part of the dynein-decorated doublet microtubules (DMTs) in cilia and flagellar axoneme. Plays a key role in the assembly or attachment of the inner dynein arm to microtubules in sperm flagella and tracheal cilia. Forms filamentous polymers in the walls of ciliary and flagellar microtubules. In Mesocricetus auratus (Golden hamster), this protein is Tektin-2.